The primary structure comprises 659 residues: Exoribonuclease 2 (659 aa).

In terms of domain architecture, RNB spans 189–531; the sequence is RENLTALHFV…NHRLIKAVLA (343 aa). One can recognise an S1 motif domain in the interval 576 to 658; sequence NAEFEAEVQD…ATRSIVGEIL (83 aa).

Belongs to the RNR ribonuclease family. RNase II subfamily.

Its subcellular location is the cytoplasm. The enzyme catalyses Exonucleolytic cleavage in the 3'- to 5'-direction to yield nucleoside 5'-phosphates.. Functionally, involved in mRNA degradation. Hydrolyzes single-stranded polyribonucleotides processively in the 3' to 5' direction. The polypeptide is Exoribonuclease 2 (Haemophilus influenzae (strain PittGG)).